Here is a 377-residue protein sequence, read N- to C-terminus: Chaperone protein DnaJ (377 aa).

The region spanning 5–70 (DYYEVLGVSR…DKKAAYDQFG (66 aa)) is the J domain. A CR-type zinc finger spans residues 133–211 (GLTKELRIPT…CHGDGRVEKS (79 aa)). Zn(2+) is bound by residues C146, C149, C163, C166, C185, C188, C199, and C202. 4 CXXCXGXG motif repeats span residues 146–153 (CDLCEGSG), 163–170 (CGTCHGQG), 185–192 (CPTCHGRG), and 199–206 (CSKCHGDG).

Belongs to the DnaJ family. Homodimer. Requires Zn(2+) as cofactor.

It localises to the cytoplasm. Participates actively in the response to hyperosmotic and heat shock by preventing the aggregation of stress-denatured proteins and by disaggregating proteins, also in an autonomous, DnaK-independent fashion. Unfolded proteins bind initially to DnaJ; upon interaction with the DnaJ-bound protein, DnaK hydrolyzes its bound ATP, resulting in the formation of a stable complex. GrpE releases ADP from DnaK; ATP binding to DnaK triggers the release of the substrate protein, thus completing the reaction cycle. Several rounds of ATP-dependent interactions between DnaJ, DnaK and GrpE are required for fully efficient folding. Also involved, together with DnaK and GrpE, in the DNA replication of plasmids through activation of initiation proteins. This Shewanella baltica (strain OS195) protein is Chaperone protein DnaJ.